The following is an 804-amino-acid chain: Probable basic-leucine zipper transcription factor C (804 aa).

Disordered stretches follow at residues phenylalanine 86–asparagine 148 and tyrosine 275–arginine 371. Residues asparagine 90–asparagine 145 show a composition bias toward low complexity. Residues tyrosine 275–alanine 291 are compositionally biased toward polar residues. Low complexity predominate over residues serine 292 to asparagine 334. Positions alanine 335 to glutamate 356 are enriched in basic and acidic residues. The bZIP domain occupies alanine 415–lysine 478. Positions arginine 421–lysine 436 are basic motif. Residues leucine 443–isoleucine 450 form a leucine-zipper region. Residues lysine 670–glycine 693 form a disordered region. A compositionally biased stretch (low complexity) spans cysteine 672 to asparagine 685.

The protein belongs to the bZIP family.

It localises to the nucleus. In terms of biological role, probable transcriptional regulator. The chain is Probable basic-leucine zipper transcription factor C (bzpC) from Dictyostelium discoideum (Social amoeba).